We begin with the raw amino-acid sequence, 413 residues long: Prophage integrase IntA (413 aa).

Positions 105–186 (NTFLLVAERW…RINEVMIYAQ (82 aa)) constitute a Core-binding (CB) domain. The Tyr recombinase domain maps to 209 to 386 (KNMPSIRPDQ…DYLEQRRPMM (178 aa)). Residues arginine 248, lysine 275, histidine 337, arginine 340, and histidine 363 contribute to the active site. Tyrosine 373 functions as the O-(3'-phospho-DNA)-tyrosine intermediate in the catalytic mechanism.

The protein belongs to the 'phage' integrase family.

Its function is as follows. Integrase is necessary for integration of the phage into the host genome by site-specific recombination. In conjunction with excisionase, integrase is also necessary for excision of the prophage from the host genome. Part of the cryptic P4-like prophage CP4-57, it excises the prophage when overexpressed, which also requires integration host factor (encoded by ihfA and ihfB). Overexpression of AlpA leads to excision of the CP4-57 prophage, which inactivates ssrA (the gene upstream of the prophage) that encodes tmRNA which is required to rescue stalled ribosomes in a process known as trans-translation. In Escherichia coli (strain K12), this protein is Prophage integrase IntA (intA).